We begin with the raw amino-acid sequence, 515 residues long: Leucine-rich repeat transmembrane neuronal protein 2 (515 aa).

A signal peptide spans 1 to 33 (MGLHFKWPLGAPMLAAIYAMSVVLKMLPALGMA). The Extracellular portion of the chain corresponds to 34 to 421 (CPPKCRCEKL…EPDNAIFTQR (388 aa)). An N-linked (GlcNAc...) asparagine glycan is attached at Asn-57. 10 LRR repeats span residues 61-83 (KGSL…QFAS), 84-107 (FSQL…AFQG), 109-131 (YKLK…TFTQ), 132-155 (LINL…LFYG), 156-179 (LRKL…LFWD), 181-203 (RSLE…GFAG), 205-227 (IKLR…HFLR), 229-251 (SSLH…MEWT), 252-275 (WSTL…VFET), and 276-299 (MPNL…ILSS). Asn-126 carries an N-linked (GlcNAc...) asparagine glycan. A glycan (N-linked (GlcNAc...) asparagine) is linked at Asn-243. The N-linked (GlcNAc...) asparagine glycan is linked to Asn-362. A helical membrane pass occupies residues 422–442 (VITGTMALLFSFFFIIFIVFI). Over 443 to 515 (SRKCCPPTLR…QQLPYKECEV (73 aa)) the chain is Cytoplasmic. The short motif at 512–515 (ECEV) is the Involved in DLG4-binding element.

The protein belongs to the LRRTM family. As to quaternary structure, interacts with DLG4. Interacts with neurexin NRXN1; interaction is mediated by heparan sulfate glycan modification on neurexin. As to expression, expressed in neuronal tissues. Widely distributed in neuropil regions in discrete puncta throughout the brain (at protein level). Detected in cortex, thalamus, striatum, olfactory bulb, cerebellum and all hippocampal subfields (at protein level). More abundant in deep than in superficial layers of neocortex (at protein level).

It localises to the cell membrane. Its subcellular location is the postsynaptic cell membrane. Functionally, involved in the development and maintenance of excitatory synapses in the nervous system. Regulates surface expression of AMPA receptors and instructs the development of functional glutamate release sites. Acts as a ligand for the presynaptic receptors NRXN1-A and NRXN1-B. The sequence is that of Leucine-rich repeat transmembrane neuronal protein 2 (Lrrtm2) from Rattus norvegicus (Rat).